Consider the following 400-residue polypeptide: LIM/homeobox protein Lhx3 (400 aa).

LIM zinc-binding domains lie at 34-84 (CAGC…CKDD) and 93-147 (CAAC…CKAD). Position 74 is a phosphoserine (serine 74). Residues 160 to 219 (AKRPRTTITAKQLETLKSAYNTSPKPARHVREQLSSETGLDMRVVQVWFQNRRAKEKRLK) constitute a DNA-binding region (homeobox). Disordered stretches follow at residues 215-280 (EKRL…SSLG) and 297-400 (TLDH…HAQF). Tyrosine 230 is subject to Phosphotyrosine. Residues serine 237 and serine 241 each carry the phosphoserine modification. Pro residues-rich tracts occupy residues 319 to 334 (GIPP…PGPQ) and 352 to 361 (SGPPGGPPPM). The segment covering 368 to 380 (GPSSDLSTESSSG) has biased composition (polar residues).

In terms of assembly, interacts with POU1F1. At neuronal promoters, interacts with LDB1, in motor neurons LDB1 is displaced by ISL1 and a ternary complex is formed in which ISL1 contacts both LHX3 and LDB1; allosteric structural changes in the DNA binding domain of LHX3, induced by the ISL1-LHX3 interaction, may explain differences in sequence specificity of the different complexes. Interacts with LDB2. May interact with CITED2/MRG1. Mostly expressed in the pituitary anterior and intermediate lobes. It is also expressed in the pineal gland and transiently in the primordia of motor neurons including the spinal cord, pons and medulla oblongata.

The protein resides in the nucleus. In terms of biological role, transcription factor. Recognizes and binds to the consensus sequence motif 5'-AATTAATTA-3' in the regulatory elements of target genes, such as glycoprotein hormones alpha chain CGA and visual system homeobox CHX10, positively modulating transcription; transcription can be co-activated by LDB2. Synergistically enhances transcription from the prolactin promoter in cooperation with POU1F1/Pit-1. Required for the establishment of the specialized cells of the pituitary gland and the nervous system. Involved in the development of interneurons and motor neurons in cooperation with LDB1 and ISL1. The chain is LIM/homeobox protein Lhx3 (Lhx3) from Mus musculus (Mouse).